The following is a 1289-amino-acid chain: Ethylene-insensitive protein 2.1 (1289 aa).

5 helical membrane-spanning segments follow: residues 18-38 (LLPA…PGKW), 48-68 (FGFD…LCQY), 96-116 (FLGV…ILGI), 128-148 (LSTC…FATL), and 155-175 (SFLC…GVLI). N-linked (GlcNAc...) asparagine glycosylation is present at Asn-185. Residues 199–219 (LMSLLGASIMPHNFFLHSAIV) traverse the membrane as a helical segment. N-linked (GlcNAc...) asparagine glycosylation is present at Asn-227. 7 consecutive transmembrane segments (helical) span residues 235 to 255 (LNHF…NFVL), 260 to 280 (ANVF…MSLM), 288 to 308 (VAPF…AFSW), 335 to 355 (IIAV…GIYQ), 356 to 376 (LLIL…IPLF), 393 to 413 (FLEF…IIFV), and 439 to 459 (YIVL…LAAT). An N-linked (GlcNAc...) asparagine glycan is attached at Asn-521. The tract at residues 611-659 (LHTEKEDDEGDNWEPEDSSKGVPGSTLSLTSDGPGSFRSLSGKSDAGGN) is disordered. A compositionally biased stretch (acidic residues) spans 616-626 (EDDEGDNWEPE). Residues 635 to 652 (STLSLTSDGPGSFRSLSG) show a composition bias toward polar residues. Phosphoserine is present on residues Ser-646 and Ser-663. An N-linked (GlcNAc...) asparagine glycan is attached at Asn-745. The disordered stretch occupies residues 792-816 (SIADSSERRYSGVRTPPSSDGWDNQ). Residues 807-816 (PPSSDGWDNQ) show a composition bias toward polar residues. Thr-819 carries the post-translational modification Phosphothreonine. A Phosphoserine modification is found at Ser-923. An N-linked (GlcNAc...) asparagine glycan is attached at Asn-1025. The segment at 1208–1227 (HRSSPPASNGMLPPASKPGR) is disordered. Positions 1274-1281 (LKRYKRRL) match the Nuclear localization signal motif.

The protein belongs to the NRAMP (TC 2.A.55) family.

It is found in the endoplasmic reticulum membrane. The protein resides in the nucleus. It localises to the cytoplasm. In terms of biological role, central factor in signaling pathways regulated by ethylene (ET) and involved in various processes including development, plant defense, senescence, nucleotide sugar flux, and tropisms. Its function is as follows. Trafficking signal inducing ethylene response. The nuclear localization is both necessary and sufficient to activate EIN3-mediated transcription and ethylene responses. The protein is Ethylene-insensitive protein 2.1 of Populus trichocarpa (Western balsam poplar).